We begin with the raw amino-acid sequence, 572 residues long: Urease subunit alpha (572 aa).

Residues 134–572 (AGIDSHIHLI…ASMNQRYFFG (439 aa)) form the Urease domain. Ni(2+) is bound by residues His-139, His-141, and Lys-222. An N6-carboxylysine modification is found at Lys-222. His-224 is a binding site for substrate. Residues His-251 and His-277 each coordinate Ni(2+). His-325 (proton donor) is an active-site residue. Asp-365 lines the Ni(2+) pocket.

It belongs to the metallo-dependent hydrolases superfamily. Urease alpha subunit family. As to quaternary structure, heterotrimer of UreA (gamma), UreB (beta) and UreC (alpha) subunits. Three heterotrimers associate to form the active enzyme. It depends on Ni cation as a cofactor. In terms of processing, carboxylation allows a single lysine to coordinate two nickel ions.

Its subcellular location is the cytoplasm. The enzyme catalyses urea + 2 H2O + H(+) = hydrogencarbonate + 2 NH4(+). It functions in the pathway nitrogen metabolism; urea degradation; CO(2) and NH(3) from urea (urease route): step 1/1. This Yersinia pseudotuberculosis serotype O:1b (strain IP 31758) protein is Urease subunit alpha.